The chain runs to 201 residues: IMP cyclohydrolase (201 aa).

This sequence belongs to the archaeal IMP cyclohydrolase family.

The enzyme catalyses IMP + H2O = 5-formamido-1-(5-phospho-D-ribosyl)imidazole-4-carboxamide. The protein operates within purine metabolism; IMP biosynthesis via de novo pathway; IMP from 5-formamido-1-(5-phospho-D-ribosyl)imidazole-4-carboxamide: step 1/1. Its function is as follows. Catalyzes the cyclization of 5-formylamidoimidazole-4-carboxamide ribonucleotide to IMP. The protein is IMP cyclohydrolase of Methanococcus maripaludis (strain C7 / ATCC BAA-1331).